A 315-amino-acid chain; its full sequence is Methionyl-tRNA formyltransferase (315 aa).

Residue 113-116 (SLLP) coordinates (6S)-5,6,7,8-tetrahydrofolate.

It belongs to the Fmt family.

The enzyme catalyses L-methionyl-tRNA(fMet) + (6R)-10-formyltetrahydrofolate = N-formyl-L-methionyl-tRNA(fMet) + (6S)-5,6,7,8-tetrahydrofolate + H(+). Its function is as follows. Attaches a formyl group to the free amino group of methionyl-tRNA(fMet). The formyl group appears to play a dual role in the initiator identity of N-formylmethionyl-tRNA by promoting its recognition by IF2 and preventing the misappropriation of this tRNA by the elongation apparatus. This Escherichia coli O17:K52:H18 (strain UMN026 / ExPEC) protein is Methionyl-tRNA formyltransferase.